Consider the following 152-residue polypeptide: MRGLKKQRRIQILIVAAVALTLSSVLIGYALRDGINFFRPPAEVAENPPPPSEVFRIGGMVEEGTLVRGQGETITFNVTDFAASIPVSYTGVLPDLFGEGEGMVGTGRLVNGTFEATEILARHDETYMPAEVTEALEAQGYSPDGYARDGDS.

The Cytoplasmic segment spans residues 1–9 (MRGLKKQRR). A helical; Signal-anchor for type II membrane protein transmembrane segment spans residues 10–30 (IQILIVAAVALTLSSVLIGYA). Topologically, residues 31 to 152 (LRDGINFFRP…PDGYARDGDS (122 aa)) are periplasmic. The heme site is built by His-123 and Tyr-127.

The protein belongs to the CcmE/CycJ family.

It is found in the cell inner membrane. In terms of biological role, heme chaperone required for the biogenesis of c-type cytochromes. Transiently binds heme delivered by CcmC and transfers the heme to apo-cytochromes in a process facilitated by CcmF and CcmH. This is Cytochrome c-type biogenesis protein CcmE from Jannaschia sp. (strain CCS1).